A 198-amino-acid polypeptide reads, in one-letter code: Ribonuclease HII (198 aa).

Positions 3 to 198 constitute an RNase H type-2 domain; it reads FLEGGVDEAG…SWRTLRGESP (196 aa). The a divalent metal cation site is built by Asp9, Glu10, and Asp104.

The protein belongs to the RNase HII family. It depends on Mn(2+) as a cofactor. Requires Mg(2+) as cofactor.

Its subcellular location is the cytoplasm. It carries out the reaction Endonucleolytic cleavage to 5'-phosphomonoester.. Functionally, endonuclease that specifically degrades the RNA of RNA-DNA hybrids. This Pyrobaculum neutrophilum (strain DSM 2338 / JCM 9278 / NBRC 100436 / V24Sta) (Thermoproteus neutrophilus) protein is Ribonuclease HII.